A 492-amino-acid polypeptide reads, in one-letter code: Catalase isozyme 2 (492 aa).

Active-site residues include histidine 65 and asparagine 138. A heme-binding site is contributed by tyrosine 348.

It belongs to the catalase family. In terms of assembly, homotetramer. It depends on heme as a cofactor.

It is found in the peroxisome. It carries out the reaction 2 H2O2 = O2 + 2 H2O. Its function is as follows. Occurs in almost all aerobically respiring organisms and serves to protect cells from the toxic effects of hydrogen peroxide. The polypeptide is Catalase isozyme 2 (CAT2) (Nicotiana plumbaginifolia (Leadwort-leaved tobacco)).